The primary structure comprises 162 residues: Small ribosomal subunit protein uS5 (162 aa).

Positions 7–70 constitute an S5 DRBM domain; that stretch reads EEKMILIRRT…YARRNMVEVP (64 aa).

The protein belongs to the universal ribosomal protein uS5 family. Part of the 30S ribosomal subunit. Contacts proteins S4 and S8.

In terms of biological role, with S4 and S12 plays an important role in translational accuracy. Located at the back of the 30S subunit body where it stabilizes the conformation of the head with respect to the body. This chain is Small ribosomal subunit protein uS5 (rpsE), found in Thermus thermophilus (strain ATCC BAA-163 / DSM 7039 / HB27).